A 445-amino-acid chain; its full sequence is MARRRKQLPETPEPASIETLSHDGRGIARRDGKTTFIDNALPGEEVMFKFTYMRRKFDEGKAVEIVTASPDRVTPPCEHSTLCGGCSLQHMSPEVQVSRKQAVLREQLAHFGGLEPEEWLAPLTGPVTGYRSKARMGVKYVEAKGETLVGFREKRNSFIAQLHTCEVLIPDVGHRIDELRTLMHGLESRSRIPQIELAAGDDDVALIIRHLDPLSEADQQALLGFCQNLGWHCYLQPGNESTVHRIWPQEGEQRLYYKHPSAGVELAFHPTDFTQVNAEINRKMVPLALDLLDISPDHTVLDLFCGLGNFTIPAAKRAGKVVGVEVSQAMVERGYENARRNSLENLEFHAWDLSQDVSGQAWARQTYDRILIDPPRTGALEMVKLMPRLGASKIVYVSCNPATLARDAGELMALGYRLKAAGVMDMFPHTTHVESIAVFEKMKKK.

A disordered region spans residues 1–21; it reads MARRRKQLPETPEPASIETLS. Residues 5-64 enclose the TRAM domain; that stretch reads RKQLPETPEPASIETLSHDGRGIARRDGKTTFIDNALPGEEVMFKFTYMRRKFDEGKAVE. [4Fe-4S] cluster contacts are provided by C77, C83, C86, and C165. S-adenosyl-L-methionine-binding residues include Q275, F304, N309, E325, D352, and D373. C399 serves as the catalytic Nucleophile.

It belongs to the class I-like SAM-binding methyltransferase superfamily. RNA M5U methyltransferase family. RlmD subfamily.

It carries out the reaction uridine(1939) in 23S rRNA + S-adenosyl-L-methionine = 5-methyluridine(1939) in 23S rRNA + S-adenosyl-L-homocysteine + H(+). Functionally, catalyzes the formation of 5-methyl-uridine at position 1939 (m5U1939) in 23S rRNA. The polypeptide is 23S rRNA (uracil(1939)-C(5))-methyltransferase RlmD (Alcanivorax borkumensis (strain ATCC 700651 / DSM 11573 / NCIMB 13689 / SK2)).